The sequence spans 434 residues: Asparagine--tRNA ligase (434 aa).

The protein belongs to the class-II aminoacyl-tRNA synthetase family.

It is found in the cytoplasm. It catalyses the reaction tRNA(Asn) + L-asparagine + ATP = L-asparaginyl-tRNA(Asn) + AMP + diphosphate + H(+). In Pyrococcus furiosus (strain ATCC 43587 / DSM 3638 / JCM 8422 / Vc1), this protein is Asparagine--tRNA ligase (asnS).